Reading from the N-terminus, the 163-residue chain is uncharacterized protein (163 aa).

The chain crosses the membrane as a helical span at residues 11 to 31; the sequence is LSWFLLLVVVILIFFLLLSCL.

It is found in the membrane. This is an uncharacterized protein from Saccharomyces cerevisiae (strain ATCC 204508 / S288c) (Baker's yeast).